Reading from the N-terminus, the 131-residue chain is Peptide methionine sulfoxide reductase MsrB (131 aa).

One can recognise a MsrB domain in the interval 8–130; sequence LDTWREELTD…NSLSLKLVPR (123 aa). Zn(2+)-binding residues include cysteine 47, cysteine 50, cysteine 96, and cysteine 99. Cysteine 119 (nucleophile) is an active-site residue.

It belongs to the MsrB Met sulfoxide reductase family. The cofactor is Zn(2+).

It catalyses the reaction L-methionyl-[protein] + [thioredoxin]-disulfide + H2O = L-methionyl-(R)-S-oxide-[protein] + [thioredoxin]-dithiol. The sequence is that of Peptide methionine sulfoxide reductase MsrB from Ectopseudomonas mendocina (strain ymp) (Pseudomonas mendocina).